The sequence spans 281 residues: Predicted GPI-anchored protein 39 (281 aa).

Positions 1–18 (MKATTFTLLLSIATAINA) are cleaved as a signal peptide. Disordered stretches follow at residues 52-94 (HHHG…SASV) and 106-227 (VSVS…SSSE). Composition is skewed to low complexity over residues 69–94 (SSSS…SASV), 106–158 (VSVS…STTD), 167–203 (ATDS…IEET), and 210–227 (SVPS…SSSE). A glycan (N-linked (GlcNAc...) asparagine) is linked at Asn-150. N-linked (GlcNAc...) asparagine glycosylation is found at Asn-239, Asn-246, Asn-249, and Asn-252. Ser-256 carries GPI-anchor amidated serine lipidation. Residues 257–281 (ANFAIQYGTDYGVAVVAAIVGALLI) constitute a propeptide, removed in mature form.

Its subcellular location is the cell membrane. This Candida albicans (strain SC5314 / ATCC MYA-2876) (Yeast) protein is Predicted GPI-anchored protein 39 (PGA39).